The following is a 452-amino-acid chain: UDP-N-acetylmuramoylalanine--D-glutamate ligase (452 aa).

119–125 (GSNGKTT) is an ATP binding site.

This sequence belongs to the MurCDEF family.

The protein resides in the cytoplasm. The catalysed reaction is UDP-N-acetyl-alpha-D-muramoyl-L-alanine + D-glutamate + ATP = UDP-N-acetyl-alpha-D-muramoyl-L-alanyl-D-glutamate + ADP + phosphate + H(+). Its pathway is cell wall biogenesis; peptidoglycan biosynthesis. Its function is as follows. Cell wall formation. Catalyzes the addition of glutamate to the nucleotide precursor UDP-N-acetylmuramoyl-L-alanine (UMA). This Streptococcus pyogenes serotype M6 (strain ATCC BAA-946 / MGAS10394) protein is UDP-N-acetylmuramoylalanine--D-glutamate ligase.